The following is a 269-amino-acid chain: Tryptophan synthase alpha chain (269 aa).

Catalysis depends on proton acceptor residues Glu-49 and Asp-60.

It belongs to the TrpA family. As to quaternary structure, tetramer of two alpha and two beta chains.

It catalyses the reaction (1S,2R)-1-C-(indol-3-yl)glycerol 3-phosphate + L-serine = D-glyceraldehyde 3-phosphate + L-tryptophan + H2O. It functions in the pathway amino-acid biosynthesis; L-tryptophan biosynthesis; L-tryptophan from chorismate: step 5/5. In terms of biological role, the alpha subunit is responsible for the aldol cleavage of indoleglycerol phosphate to indole and glyceraldehyde 3-phosphate. The protein is Tryptophan synthase alpha chain of Pseudomonas putida (strain GB-1).